A 308-amino-acid chain; its full sequence is tRNA pseudouridine synthase B (308 aa).

The active-site Nucleophile is Asp-47.

It belongs to the pseudouridine synthase TruB family. Type 1 subfamily.

The enzyme catalyses uridine(55) in tRNA = pseudouridine(55) in tRNA. Responsible for synthesis of pseudouridine from uracil-55 in the psi GC loop of transfer RNAs. The chain is tRNA pseudouridine synthase B from Xanthomonas axonopodis pv. citri (strain 306).